The chain runs to 67 residues: UPF0181 protein KPK_1966 (67 aa).

A disordered region spans residues 48 to 67 (EQIVARFEDEDEDQDEDEDD). The segment covering 55-67 (EDEDEDQDEDEDD) has biased composition (acidic residues).

Belongs to the UPF0181 family.

This Klebsiella pneumoniae (strain 342) protein is UPF0181 protein KPK_1966.